The primary structure comprises 181 residues: MMKFKPNQTRTYDREGFKKRAACLCFRSEQEDEVLLVSSSRYPDQWIVPGGGMEPEEEPGGAAVREVYEEAGVKGKLGRLLGIFEQNQDRKHRTYVYVLTVTEILEDWEDSVNIGRKREWFKVEDAIKVLQCHKPVHAEYLEKLKLGCSPANGNSTVPSLPDNNALFVTAAQTSGLPSSVR.

Residues Arg-10, 18-20 (KKR), and 39-41 (SSR) each bind substrate. One can recognise a Nudix hydrolase domain in the interval 18-145 (KKRAACLCFR…VHAEYLEKLK (128 aa)). Mg(2+) contacts are provided by Gly-50 and Glu-66. A Nudix box motif is present at residues 51–72 (GGMEPEEEPGGAAVREVYEEAG). Glu-69 functions as the Proton acceptor in the catalytic mechanism. Glu-70 is a Mg(2+) binding site. Substrate contacts are provided by residues 90 to 92 (RKH), Arg-116, and Lys-134.

It belongs to the Nudix hydrolase family. DIPP subfamily. It depends on Mg(2+) as a cofactor. Mn(2+) is required as a cofactor.

It is found in the cytoplasm. The enzyme catalyses diphospho-myo-inositol polyphosphate + H2O = myo-inositol polyphosphate + phosphate.. Functionally, cleaves a beta-phosphate from the diphosphate groups in PP-InsP5 (diphosphoinositol pentakisphosphate), PP-InsP4 and [PP]2-InsP4 (bisdiphosphoinositol tetrakisphosphate), suggesting that it may play a role in signal transduction. Also able to catalyze the hydrolysis of dinucleoside oligophosphate Ap6A, but not Ap5A. The major reaction products are ADP and p4a from Ap6A. Also able to hydrolyze 5-phosphoribose 1-diphosphate. Does not play a role in U8 snoRNA decapping activity. Binds U8 snoRNA. This is Diphosphoinositol polyphosphate phosphohydrolase NUDT4B from Homo sapiens (Human).